Reading from the N-terminus, the 250-residue chain is Cruxrhodopsin-3 (250 aa).

At 1 to 9 (MPAPEGEAI) the chain is on the extracellular side. The chain crosses the membrane as a helical span at residues 10-27 (WLWLGTAGMFLGMLYFIA). Residues 28–41 (RGWGETDSRRQKFY) lie on the Cytoplasmic side of the membrane. Residues 42 to 60 (IATILITAIAFVNYLAMAL) traverse the membrane as a helical segment. Residues 61–77 (GFGLTIVEIAGEQRPIY) are Extracellular-facing. Residues 78–94 (WARYSDWLFTTPLLLYD) traverse the membrane as a helical segment. Residues 95-105 (LGLLAGADRNT) are Cytoplasmic-facing. A helical membrane pass occupies residues 106–125 (ISSLVSLDVLMIGTGLVATL). Topologically, residues 126–138 (SAGSGVLSAGAER) are extracellular. A helical membrane pass occupies residues 139–158 (LVWWGISTAFLLVLLYFLFS). Residues 159-176 (SLSGRVADLPSDTRSTFK) lie on the Cytoplasmic side of the membrane. A helical transmembrane segment spans residues 177-195 (TLRNLVTVVWLVYPVWWLV). The Extracellular portion of the chain corresponds to 196-207 (GTEGIGLVGIGI). Residues 208–227 (ETAGFMVIDLVAKVGFGIIL) traverse the membrane as a helical segment. At lysine 220 the chain carries N6-(retinylidene)lysine. The Cytoplasmic segment spans residues 228–250 (LRSHGVLDGAAETTGAGATATAD).

Belongs to the archaeal/bacterial/fungal opsin family. In terms of assembly, homotrimer. Binds bacterioruberin in the crevice between neighboring subunits.

The protein localises to the cell membrane. Light-driven proton pump. This chain is Cruxrhodopsin-3 (cop3), found in Haloarcula vallismortis (Halobacterium vallismortis).